Here is a 159-residue protein sequence, read N- to C-terminus: Nutritionally-regulated adipose and cardiac-enriched protein homolog (159 aa).

The disordered stretch occupies residues 1–67 (MKTAVHALSP…GDEPRRTTRH (67 aa)). Composition is skewed to basic and acidic residues over residues 12 to 25 (SRPE…KNEE) and 50 to 63 (SPQE…EPRR). Residues 107 to 124 (LTACILLALALGMCCGQA) traverse the membrane as a helical segment.

Its subcellular location is the cell membrane. This is Nutritionally-regulated adipose and cardiac-enriched protein homolog (NRAC) from Bos taurus (Bovine).